Here is a 686-residue protein sequence, read N- to C-terminus: MKPSWLQCRKVTGAGGLGGSLPASSPARGAGPARRAYVAPGPRGALGGRGCRALSSGGGEYKTHFAASVTDPERFWGKAAEQISWYKPWTKTLENRHSPSTSWFVEGMLNICYNAIDRHIENGKGDKIAIIYDSPVTNTKATITYKEVLEQVSKLAGVLVKHGVKKGDTVVIYMPMIPQAMYAMLACARIGAIHSLIFGGFASKELSTRIDHAKPKLVITASFGIEPGRKVEYVPLVEEALRIGQHKPDKVLIYNRPHTDMVPLAPGYYLDWDEELSKAQSHDCVPVLSEHPLYILYTSGTTGLPKGVVRPTGGYAVMLNWSMSSIYGLKPGEVWWAASDLGWVVGHSYICYGPLLHGNTTVLYEGKPVGTPDAGAYFRVLAEHGVAALFTAPTAIRAIRQQDPGAALGKQYSLTRFKTLFVAGERCDVETLEWSKKVFRVPVLDHWWQTETGSPITASCIGLGNSKTPPPGQAGKSVPGYNVMILDDNMQKLKARCLGNIVVKLPLPPGAFSGLWKNQEAFKHLYFEKFPGYYDTMDAGYMDEEGYVYVMSRVDDVINVAGHRISAGALEESILSLGIVADCAVVGKEDSLKGHIPLALCVLKKDINTTEEHVLEEIVKHVRQTIGPVAAFRKAVFVKQLPKTRSGKIPRSTLSALVNGKPYKVSPTIEDPGIFEHIEAMLKQAS.

The transit peptide at M1–G29 directs the protein to the mitochondrion. E226–R229 lines the CoA pocket. Residues G424–R426 and D445–T450 contribute to the ATP site. Residue K517 is modified to N6-succinyllysine. K523 bears the N6-acetyllysine mark. ATP contacts are provided by D538, R553, and R564. A CoA-binding site is contributed by R623.

This sequence belongs to the ATP-dependent AMP-binding enzyme family.

It localises to the mitochondrion matrix. The catalysed reaction is acetate + ATP + CoA = acetyl-CoA + AMP + diphosphate. It catalyses the reaction propanoate + ATP + CoA = propanoyl-CoA + AMP + diphosphate. It carries out the reaction butanoate + ATP + CoA = butanoyl-CoA + AMP + diphosphate. In terms of biological role, catalyzes the synthesis of acetyl-CoA from short-chain fatty acids. Propionate is the preferred substrate but can also utilize acetate and butyrate with a much lower affinity. The sequence is that of Acyl-CoA synthetase short-chain family member 3, mitochondrial (ACSS3) from Bos taurus (Bovine).